Reading from the N-terminus, the 253-residue chain is MMTVLEDMLRKTRNGKVHMTLIDPGAKPPQECARIAEEAEMAGTDFIMVGGSTDIDSRAMDEAISAIKAKTDLKVIIFPGSSLMISPKADAIFFMSLLNSGSLEYVVGHQVKAAIPLSAMKIEKIPMAYLVFDPGMTVGRVGKAHLIPRDDEKTALSYALAAQYFGFRLVYFEAGSGSPYHVGENVVRRVKQELDIPVIVGGGIRTPEAAKALAQAGADMIVTGTIAERSVNVYEALHPIVESIKEVGISKIQ.

Positions 23 and 52 each coordinate Mg(2+). Residues Tyr171–Gly177, Gly202–Gly203, and Gly224–Thr225 each bind sn-glycerol 1-phosphate.

The protein belongs to the GGGP/HepGP synthase family. Group II subfamily. In terms of assembly, homodimer. Mg(2+) serves as cofactor.

It is found in the cytoplasm. The catalysed reaction is sn-glycerol 1-phosphate + (2E,6E,10E)-geranylgeranyl diphosphate = sn-3-O-(geranylgeranyl)glycerol 1-phosphate + diphosphate. The protein operates within membrane lipid metabolism; glycerophospholipid metabolism. With respect to regulation, inhibited by high concentrations of magnesium (&gt;10 mM) and by EDTA in vitro. Its function is as follows. Prenyltransferase that catalyzes the transfer of the geranylgeranyl moiety of geranylgeranyl diphosphate (GGPP) to the C3 hydroxyl of sn-glycerol-1-phosphate (G1P). This reaction is the first ether-bond-formation step in the biosynthesis of archaeal membrane lipids. Cannot use sn-glycerol-3-phosphate (G3P) as substrate. This is Geranylgeranylglyceryl phosphate synthase from Thermoplasma acidophilum (strain ATCC 25905 / DSM 1728 / JCM 9062 / NBRC 15155 / AMRC-C165).